A 179-amino-acid chain; its full sequence is Segregation and condensation protein B (179 aa).

The protein belongs to the ScpB family. As to quaternary structure, homodimer. Homodimerization may be required to stabilize the binding of ScpA to the Smc head domains. Component of a cohesin-like complex composed of ScpA, ScpB and the Smc homodimer, in which ScpA and ScpB bind to the head domain of Smc. The presence of the three proteins is required for the association of the complex with DNA.

The protein localises to the cytoplasm. Participates in chromosomal partition during cell division. May act via the formation of a condensin-like complex containing Smc and ScpA that pull DNA away from mid-cell into both cell halves. This chain is Segregation and condensation protein B, found in Staphylococcus haemolyticus (strain JCSC1435).